We begin with the raw amino-acid sequence, 191 residues long: Pyridoxal 5'-phosphate synthase subunit PdxT (191 aa).

An L-glutamine-binding site is contributed by 46–48 (GES). Residue Cys-78 is the Nucleophile of the active site. L-glutamine-binding positions include Arg-105 and 133–134 (IR). Active-site charge relay system residues include His-169 and Glu-171.

Belongs to the glutaminase PdxT/SNO family. In terms of assembly, in the presence of PdxS, forms a dodecamer of heterodimers. Only shows activity in the heterodimer.

It catalyses the reaction aldehydo-D-ribose 5-phosphate + D-glyceraldehyde 3-phosphate + L-glutamine = pyridoxal 5'-phosphate + L-glutamate + phosphate + 3 H2O + H(+). The enzyme catalyses L-glutamine + H2O = L-glutamate + NH4(+). Its pathway is cofactor biosynthesis; pyridoxal 5'-phosphate biosynthesis. In terms of biological role, catalyzes the hydrolysis of glutamine to glutamate and ammonia as part of the biosynthesis of pyridoxal 5'-phosphate. The resulting ammonia molecule is channeled to the active site of PdxS. This Fervidobacterium nodosum (strain ATCC 35602 / DSM 5306 / Rt17-B1) protein is Pyridoxal 5'-phosphate synthase subunit PdxT.